The primary structure comprises 169 residues: Der GTPase-activating protein YihI (169 aa).

Disordered regions lie at residues 1-83 (MNPL…PTKP) and 150-169 (DEEE…LKGN). Basic and acidic residues predominate over residues 21-30 (NREELNAEGR). A compositionally biased stretch (basic residues) spans 31–40 (ARKREKKHRG). 2 stretches are compositionally biased toward basic and acidic residues: residues 51–66 (SGDK…DPRL) and 150–161 (DEEEREEEKQDD).

This sequence belongs to the YihI family. Interacts with Der.

Functionally, a GTPase-activating protein (GAP) that modifies Der/EngA GTPase function. May play a role in ribosome biogenesis. This is Der GTPase-activating protein YihI from Photorhabdus laumondii subsp. laumondii (strain DSM 15139 / CIP 105565 / TT01) (Photorhabdus luminescens subsp. laumondii).